Reading from the N-terminus, the 400-residue chain is MSESVRTNTSIWSKGMLSVIVAQFLSAFGDNALLFATLALLKTQFYPDWSQPVLQMVFVGAYILFAPFVGQIADSFAKGRVMMVANGLKLAGAAGICLGVNPFVGYTLVGIGAAAYSPAKYGILGELTTGDKLVKANGLMEASTIAAILLGSVAGGVLADWHVIAALVACALAYAGAVAANLFIPKLVAARPGQSWRLSAMTRSFFSACVVLWRNGETRFSLVGTGLFWGAGVTLRFLLVLWVPVALGITDNATPTYLNAMVAVGIVVGAGAAAKLVTLETVSRCMPAGILIGVVVAIFSLQHALLPAYALLLLIGMLGGFFVVPLNALLQERGKKSVGAGNAIAVQNLGENSAMLLMLGLYSLAVLVGVPAVAIGIGFGVLFALAIAALWIWQRRQASY.

A run of 12 helical transmembrane segments spans residues 19–39 (VIVA…ATLA), 53–73 (VLQM…GQIA), 91–111 (AGAA…LVGI), 139–159 (LMEA…GVLA), 164–184 (IAAL…NLFI), 195–213 (SWRL…VVLW), 227–247 (LFWG…PVAL), 257–277 (YLNA…AKLV), 281–301 (TVSR…IFSL), 304–324 (ALLP…FFVV), 352–372 (NSAM…GVPA), and 373–393 (VAIG…LWIW).

The protein belongs to the major facilitator superfamily. LplT (TC 2.A.1.42) family.

The protein resides in the cell inner membrane. Its function is as follows. Catalyzes the facilitated diffusion of 2-acyl-glycero-3-phosphoethanolamine (2-acyl-GPE) into the cell. The chain is Lysophospholipid transporter LplT from Salmonella heidelberg (strain SL476).